A 476-amino-acid polypeptide reads, in one-letter code: Aspartyl/glutamyl-tRNA(Asn/Gln) amidotransferase subunit B (476 aa).

The protein belongs to the GatB/GatE family. GatB subfamily. Heterotrimer of A, B and C subunits.

It carries out the reaction L-glutamyl-tRNA(Gln) + L-glutamine + ATP + H2O = L-glutaminyl-tRNA(Gln) + L-glutamate + ADP + phosphate + H(+). The catalysed reaction is L-aspartyl-tRNA(Asn) + L-glutamine + ATP + H2O = L-asparaginyl-tRNA(Asn) + L-glutamate + ADP + phosphate + 2 H(+). Its function is as follows. Allows the formation of correctly charged Asn-tRNA(Asn) or Gln-tRNA(Gln) through the transamidation of misacylated Asp-tRNA(Asn) or Glu-tRNA(Gln) in organisms which lack either or both of asparaginyl-tRNA or glutaminyl-tRNA synthetases. The reaction takes place in the presence of glutamine and ATP through an activated phospho-Asp-tRNA(Asn) or phospho-Glu-tRNA(Gln). This is Aspartyl/glutamyl-tRNA(Asn/Gln) amidotransferase subunit B from Geobacillus thermodenitrificans (strain NG80-2).